The following is a 260-amino-acid chain: MQIALLCEDLNRQSELEAIATRWGLTHDEDNVFALVLTTQQLELRKRDEPKLGAIFVDLVSGAVAHRRKFGGGKGQSIAKAVGLNKGATPLVLDGTAGLGRDAFVLASLGCKVQMVERHPVVAALLDDGLSRAKHDADIGGWVSQRMSLLHASSHDALEQLMAQDDFVQPDVVYLDPMYPHPENKKKSALVKKEMRVFQSLVGADNDADALLAPALLMATKRVVVKRPDYAEWLDNQKPSMAIETKKNRFDVYVNAGMKS.

S-adenosyl-L-methionine contacts are provided by residues 101-102 (RD), 117-118 (ER), 153-154 (SS), and D176.

It belongs to the methyltransferase superfamily. RsmJ family.

The protein resides in the cytoplasm. It catalyses the reaction guanosine(1516) in 16S rRNA + S-adenosyl-L-methionine = N(2)-methylguanosine(1516) in 16S rRNA + S-adenosyl-L-homocysteine + H(+). Its function is as follows. Specifically methylates the guanosine in position 1516 of 16S rRNA. The polypeptide is Ribosomal RNA small subunit methyltransferase J (Aliivibrio salmonicida (strain LFI1238) (Vibrio salmonicida (strain LFI1238))).